A 692-amino-acid polypeptide reads, in one-letter code: Elongation factor G (692 aa).

The region spanning 9–283 is the tr-type G domain; that stretch reads DKLRNIGIMA…AVIDYLPSPL (275 aa). Residues 18–25, 82–86, and 136–139 each bind GTP; these read AHIDAGKT, DTPGH, and NKMD.

The protein belongs to the TRAFAC class translation factor GTPase superfamily. Classic translation factor GTPase family. EF-G/EF-2 subfamily.

It is found in the cytoplasm. Its function is as follows. Catalyzes the GTP-dependent ribosomal translocation step during translation elongation. During this step, the ribosome changes from the pre-translocational (PRE) to the post-translocational (POST) state as the newly formed A-site-bound peptidyl-tRNA and P-site-bound deacylated tRNA move to the P and E sites, respectively. Catalyzes the coordinated movement of the two tRNA molecules, the mRNA and conformational changes in the ribosome. This Thermotoga maritima (strain ATCC 43589 / DSM 3109 / JCM 10099 / NBRC 100826 / MSB8) protein is Elongation factor G (fusA).